The following is a 247-amino-acid chain: Chymase (247 aa).

Residues 1–19 form the signal peptide; sequence MHLLTLHLLLLLLGSSTKA. Residues 20 to 21 constitute a propeptide, activation peptide; it reads GE. A Peptidase S1 domain is found at 22–245; the sequence is IIGGTECIPH…YRPWINKILR (224 aa). C51 and C67 form a disulfide bridge. H66 functions as the Charge relay system in the catalytic mechanism. N-linked (GlcNAc...) asparagine glycosylation is present at N80. The active-site Charge relay system is D110. 2 disulfides stabilise this stretch: C144-C209 and C175-C188. Catalysis depends on S203, which acts as the Charge relay system.

The protein belongs to the peptidase S1 family. Granzyme subfamily. Mast cells.

The protein localises to the secreted. Its subcellular location is the cytoplasmic granule. It catalyses the reaction Preferential cleavage: Phe-|-Xaa &gt; Tyr-|-Xaa &gt; Trp-|-Xaa &gt; Leu-|-Xaa.. In terms of biological role, major secreted protease of mast cells with suspected roles in vasoactive peptide generation, extracellular matrix degradation, and regulation of gland secretion. The protein is Chymase (Cma1) of Mus musculus (Mouse).